The chain runs to 78 residues: Probable [Fe-S]-dependent transcriptional repressor (78 aa).

Residues C56, C61, C64, and C70 each contribute to the iron-sulfur cluster site.

This sequence belongs to the FeoC family.

Its function is as follows. May function as a transcriptional regulator that controls feoABC expression. The protein is Probable [Fe-S]-dependent transcriptional repressor of Salmonella heidelberg (strain SL476).